The primary structure comprises 70 residues: MWFEVLPGIAVMGVCLFIPGMATARIHRFSNGGKEKRVAHYPYQWYLMERDRRVSGVNRSYVSKGLENID.

Residues 1-21 (MWFEVLPGIAVMGVCLFIPGM) form a helical membrane-spanning segment.

It belongs to the complex I NDUFA1 subunit family. Complex I is composed of 45 different subunits.

It is found in the mitochondrion inner membrane. In terms of biological role, accessory subunit of the mitochondrial membrane respiratory chain NADH dehydrogenase (Complex I), that is believed not to be involved in catalysis. Complex I functions in the transfer of electrons from NADH to the respiratory chain. The immediate electron acceptor for the enzyme is believed to be ubiquinone. The protein is NADH dehydrogenase [ubiquinone] 1 alpha subcomplex subunit 1 (NDUFA1) of Bos taurus (Bovine).